Consider the following 64-residue polypeptide: Small ribosomal subunit protein eS17 (64 aa).

The protein belongs to the eukaryotic ribosomal protein eS17 family.

This chain is Small ribosomal subunit protein eS17, found in Natronomonas pharaonis (strain ATCC 35678 / DSM 2160 / CIP 103997 / JCM 8858 / NBRC 14720 / NCIMB 2260 / Gabara) (Halobacterium pharaonis).